A 304-amino-acid chain; its full sequence is ATP synthase gamma chain (304 aa).

It belongs to the ATPase gamma chain family. F-type ATPases have 2 components, CF(1) - the catalytic core - and CF(0) - the membrane proton channel. CF(1) has five subunits: alpha(3), beta(3), gamma(1), delta(1), epsilon(1). CF(0) has three main subunits: a, b and c.

It localises to the cell membrane. In terms of biological role, produces ATP from ADP in the presence of a proton gradient across the membrane. The gamma chain is believed to be important in regulating ATPase activity and the flow of protons through the CF(0) complex. This Chloroherpeton thalassium (strain ATCC 35110 / GB-78) protein is ATP synthase gamma chain.